Here is a 688-residue protein sequence, read N- to C-terminus: Sodium channel and clathrin linker 1 (688 aa).

Ala2 carries the N-acetylalanine modification. Residues 59-673 (LIAEYEKHLE…SASQQLSVIT (615 aa)) adopt a coiled-coil conformation. Phosphoserine is present on Ser681.

In terms of assembly, interacts with SCN10A and clathrin. Identified in a complex containing SCN10A, clathrin and SCLT1. As to expression, detected in small neurons in dorsal root ganglia. Detected in C-type fibers of sciatic nerve (at protein level).

The protein resides in the cytoplasm. Its subcellular location is the cytoskeleton. It localises to the microtubule organizing center. It is found in the centrosome. The protein localises to the centriole. Functionally, adapter protein that links SCN10A to clathrin. Regulates SCN10A channel activity, possibly by promoting channel internalization. This Rattus norvegicus (Rat) protein is Sodium channel and clathrin linker 1 (Sclt1).